The sequence spans 349 residues: MVSNNAVIIKKYLDSTAGYPVIGEHLAFEKREFDLENAQVDEETPVLLKNIYTSVDPYLRMRMQSPKHASYIPPLELGKPFYNSTVAKVVKSTLDQYKPGMDVVFVSGWEEYTFVSKQALGFLQPINNPYKLPLIDFVGSLGMPSQTAYCGLKHIGKPKAGETIYISAASGAVGQMAGQLAKAMGLHVVGSVGSDEKFKICLDSGYDSVFNYKKESPFKALPRLCPKGIDIYFENVGGETMDAVLENMNLQGRIIFCGAISQYNNPNPYRVKNLGMVLVKSLTIQGFIVANILPQYQEQYFEEMPKLIAEGKIKYKCDVYDGLESAPEAFIGMLQGKNSGKTIVKIADE.

It belongs to the zinc-containing alcohol dehydrogenase family. Quinone oxidoreductase subfamily.

The protein resides in the cytoplasm. The protein localises to the nucleus. The chain is Zinc-type alcohol dehydrogenase-like protein PB24D3.08c from Schizosaccharomyces pombe (strain 972 / ATCC 24843) (Fission yeast).